The primary structure comprises 386 residues: Protein RETICULATA-RELATED 4, chloroplastic (386 aa).

A chloroplast-targeting transit peptide spans 1–61 (MAIASCFFCV…RRVPITPVLS (61 aa)). The interval 61–99 (SASSGNGGSDNNGGGLSGGGGGGDGGKNDGDGHGDEDRD) is disordered. Gly residues predominate over residues 65–85 (GNGGSDNNGGGLSGGGGGGDG). Residues 86–99 (GKNDGDGHGDEDRD) are compositionally biased toward basic and acidic residues. Transmembrane regions (helical) follow at residues 201 to 221 (VVFADVAMAIIADFMLVYLPA) and 273 to 293 (KLFAVGTTSSLVGTAITNAFI).

This sequence belongs to the RETICULATA family.

It is found in the plastid. The protein resides in the chloroplast membrane. Functionally, may play a role in leaf development. The protein is Protein RETICULATA-RELATED 4, chloroplastic of Arabidopsis thaliana (Mouse-ear cress).